Here is a 101-residue protein sequence, read N- to C-terminus: MSDNSEVQGIHPVELSVYSLVSSDLDNLYQAINELRESQALLILKLRTVRDSLRLENELLFDSNEYKAQFKEVNNLQKRLQKITLRLKDLERRSSQLTTSS.

Positions 62–100 form a coiled coil; sequence DSNEYKAQFKEVNNLQKRLQKITLRLKDLERRSSQLTTS.

The protein belongs to the SNAPIN family. As to quaternary structure, component of the biogenesis of lysosome-related organelles complex-1 (BLOC-1).

The protein localises to the endosome. Functionally, component of the biogenesis of lysosome-related organelles complex-1 (BLOC-1), a complex involved in endosomal cargo sorting. The polypeptide is Biogenesis of lysosome-related organelles complex 1 subunit SNN1 (SNN1) (Candida glabrata (strain ATCC 2001 / BCRC 20586 / JCM 3761 / NBRC 0622 / NRRL Y-65 / CBS 138) (Yeast)).